The primary structure comprises 1034 residues: Isoleucine--tRNA ligase (1034 aa).

A 'HIGH' region motif is present at residues 48–58 (PTANGKPHIGH). Positions 588–592 (KMSKH) match the 'KMSKS' region motif. Lysine 591 is an ATP binding site.

The protein belongs to the class-I aminoacyl-tRNA synthetase family. IleS type 2 subfamily. Monomer. Zn(2+) is required as a cofactor.

Its subcellular location is the cytoplasm. It carries out the reaction tRNA(Ile) + L-isoleucine + ATP = L-isoleucyl-tRNA(Ile) + AMP + diphosphate. Functionally, catalyzes the attachment of isoleucine to tRNA(Ile). As IleRS can inadvertently accommodate and process structurally similar amino acids such as valine, to avoid such errors it has two additional distinct tRNA(Ile)-dependent editing activities. One activity is designated as 'pretransfer' editing and involves the hydrolysis of activated Val-AMP. The other activity is designated 'posttransfer' editing and involves deacylation of mischarged Val-tRNA(Ile). The sequence is that of Isoleucine--tRNA ligase from Clostridium kluyveri (strain ATCC 8527 / DSM 555 / NBRC 12016 / NCIMB 10680 / K1).